We begin with the raw amino-acid sequence, 582 residues long: Transcription factor PCF5 (582 aa).

Disordered stretches follow at residues 30 to 78 and 123 to 195; these read AAGK…QHDH and SPMG…GGGG. The segment covering 51–64 has biased composition (gly residues); sequence GGDGGGVGGGGSGG. The 59-residue stretch at 213-271 folds into the TCP domain; sequence RKDRHSKVCTARGPRDRRVRLSAHTAIQFYDVQDRLGYDRPSKAVDWLIKNAKDAIDKL. Disordered stretches follow at residues 283 to 306, 402 to 423, and 548 to 582; these read GAGA…ENSD, MFHH…TTQQ, and RLPA…ASHH.

Forms homodimers and heterodimers with PCF2.

The protein resides in the nucleus. Functionally, transcription activator. Binds the promoter core sequence 5'-GGNCC-3'. In Oryza sativa subsp. indica (Rice), this protein is Transcription factor PCF5 (PCF5).